The sequence spans 35 residues: Peptide ToHyp2 (35 aa).

A compositionally biased stretch (pro residues) spans 1–29 (LPKPPLLPPPVPGLAPGLPPLPVPDPVPH). Residues 1-35 (LPKPPLLPPPVPGLAPGLPPLPVPDPVPHPPKKPP) form a disordered region. A hydroxyproline mark is found at Pro5, Pro9, Pro10, Pro12, Pro16, Pro20, Pro31, and Pro35.

In terms of processing, O-glycosylated; contains pentose side chains at some or all of the hydroxyproline residues. Glycosylation is required for full antifungal activity.

Functionally, antimicrobial peptide. Inhibits elongation of hyphae in B.sorokiniana (IC(50)=3.8 uM) but has no effect on this process or on germination of conidia in a panel of other phytopathogenic fungi. At concentrations above 10 uM, has antibacterial activity. This is Peptide ToHyp2 from Taraxacum officinale (Common dandelion).